A 557-amino-acid chain; its full sequence is Glucose-6-phosphate isomerase (557 aa).

The active-site Proton donor is the Glu-361. Catalysis depends on residues His-392 and Lys-520.

It belongs to the GPI family.

The protein resides in the cytoplasm. It carries out the reaction alpha-D-glucose 6-phosphate = beta-D-fructose 6-phosphate. The protein operates within carbohydrate biosynthesis; gluconeogenesis. It functions in the pathway carbohydrate degradation; glycolysis; D-glyceraldehyde 3-phosphate and glycerone phosphate from D-glucose: step 2/4. Its function is as follows. Catalyzes the reversible isomerization of glucose-6-phosphate to fructose-6-phosphate. The protein is Glucose-6-phosphate isomerase of Acinetobacter baylyi (strain ATCC 33305 / BD413 / ADP1).